The primary structure comprises 222 residues: Neurotrophic factor BDNF precursor form (222 aa).

A signal peptide spans 1–4 (CMKA). A propeptide spanning residues 5–113 (APMKEVSVRG…AANMSMRVRR (109 aa)) is cleaved from the precursor. Asn106 carries N-linked (GlcNAc...) asparagine glycosylation. Intrachain disulfides connect Cys126-Cys193 and Cys171-Cys222.

The protein belongs to the NGF-beta family.

It localises to the secreted. In terms of biological role, promotes the survival of neuronal populations that are all located either in the central nervous system or directly connected to it. The chain is Neurotrophic factor BDNF precursor form (BDNF) from Xenopeltis unicolor (Sunbeam snake).